The following is a 1272-amino-acid chain: MDLFDFFRDWDLEQQCHYEQDRSALKKREWERRNQEVQQEDDLFSSGFDLFGEPYKTNKGDALANRVQNTLGNYDEMKDLLTNHSNQNHLVGIPKNSVPQNPNNKNEPSFFPEQKNRIIPPHQDNTHPSAPMPPPSVVILNSTLIHSNRKSKPEWSRDSHNPSTVLASQASGQPNKMQTLTQDQSQAKLEDFFVYPAEQPQIGEAEESNPSAKEDSNPNSSGEDAFKEIFQSNSPEESEFAVQAPGSPLVASSLLAPSSGLSVQNFPPGLYCKTSMGQQKPTAYVRPMDGQDQAPDISPTLKPSIEFENSFGNLSFGTLLDGKPSAASSKTKLPKFTILQTSEVSLPSDPSCVEEILRESQHLTPGFTLQKWNDPTTRASTKMLEDDLKLSSDEDDLEPVKTLTTQCTATELYQAVEKAKPRNNPVNPPLATPQPPPAVQASGGSGSSSESESSSESDSDTESSTTDSESNEAPRVATPEPEPPSTNKWQLDKWLNKVTSQNKSFICGQNETPMETISLPPPIIQPMEVQMKVKTNASQVPAEPKERPLLSLIREKARPRPTQKIPETKALKHKLSTTSETVSQRTIGKKQPKKVEKNTSIDEFTWPKPNITSSTPKEKESVELHDPPRGRNKATAHKPAPRKEPRPNIPLAPEKKKYRGPGKIVPKSREFIETDSSTSDSNTDQEETLQIKVLPPCIISGGNTAKSKEICGASLTLSTLMSSSGSNNNLSISNEEPTFSPIPVMQTEMLSPLRDHENLKNLWVKIDLDLLSRVPGHNSLHAAPAKPDHKETATKPKRQTALTAVEKPAPKGKRKHKPTEVAEKIPEKKQRLEEATTICLLPPCISPAPPHKPPNTRENNSSRRANRRKEEKLFPPPLSPLPEDPPRRRNVSGNNGPFGQDKNIAMTGQITSTKPKRTEGKFCATFKGISVNEGDTPKKASSATITVTNTAIATATVTATAIVTTTVTATATATATTTTTTTTISTITSTITTGLMDSSHLEMTSWAALPLLSSSSTNVRRPKLTFDDSVHNADYYMQEAKKLKHKADALFEKFGKAVNYADAALSFTECGNAMERDPLEAKSPYTMYSETVELLRYAMRLKNFASPLASDGDKKLAVLCYRCLSLLYLRMFKLKKDHAMKYSRSLMEYFKQNASKVAQIPSPWVGNGKNTPSPVSLNNVSPINAMGNCNNGPVTIPQRIHHMAASHVNITSNVLRGYEHWDMADKLTRENKEFFGDLDTLMGPLTQHSSMTNLVRYVRQGLCWLRIDAHLL.

Disordered stretches follow at residues Ile93 to Asp183, Gln201 to Ala225, and Ala283 to Lys302. The segment covering Ser97–Glu107 has biased composition (polar residues). The span at Ser151–His160 shows a compositional bias: basic and acidic residues. Residues Asn161–Asp183 are compositionally biased toward polar residues. Ser391 bears the Phosphoserine mark. 4 disordered regions span residues Lys418–Leu491, Thr535–Glu687, Ser779–Lys829, and Pro842–Asn903. A compositionally biased stretch (pro residues) spans Val426–Ala438. Residues Val439 to Glu452 are compositionally biased toward low complexity. The residue at position 478 (Thr478) is a Phosphothreonine. Basic and acidic residues predominate over residues Glu543–Arg558. The segment covering Ser576 to Thr586 has biased composition (polar residues). Residues Pro616 to Arg629 are compositionally biased toward basic and acidic residues. Residues Gly630–Ala640 show a composition bias toward basic residues. The segment covering Pro818 to Lys829 has biased composition (basic and acidic residues). Pro residues-rich tracts occupy residues Cys844–Pro853 and Phe874–Glu883.

The protein belongs to the AF4 family.

Its subcellular location is the nucleus speckle. In terms of biological role, RNA-binding protein. Might be involved in alternative splicing regulation through an interaction with G-quartet RNA structure. The polypeptide is AF4/FMR2 family member 2 (AFF2) (Pan troglodytes (Chimpanzee)).